The chain runs to 155 residues: 3-dehydroquinate dehydratase (155 aa).

Tyrosine 31 functions as the Proton acceptor in the catalytic mechanism. Asparagine 83, histidine 89, and aspartate 96 together coordinate substrate. The active-site Proton donor is histidine 109. Residues 110-111 and arginine 120 each bind substrate; that span reads LS.

Belongs to the type-II 3-dehydroquinase family. In terms of assembly, homododecamer.

It carries out the reaction 3-dehydroquinate = 3-dehydroshikimate + H2O. It functions in the pathway metabolic intermediate biosynthesis; chorismate biosynthesis; chorismate from D-erythrose 4-phosphate and phosphoenolpyruvate: step 3/7. Functionally, catalyzes a trans-dehydration via an enolate intermediate. The sequence is that of 3-dehydroquinate dehydratase from Laribacter hongkongensis (strain HLHK9).